Reading from the N-terminus, the 779-residue chain is Phosphoribosylformylglycinamidine synthase subunit PurL (779 aa).

Residue His-52 is part of the active site. Residues Tyr-55 and Lys-94 each coordinate ATP. Residue Glu-96 participates in Mg(2+) binding. Residues 97–100 (SHNH) and Arg-119 contribute to the substrate site. His-98 serves as the catalytic Proton acceptor. Mg(2+) is bound at residue Asp-120. Gln-243 lines the substrate pocket. Asp-271 provides a ligand contact to Mg(2+). Residue 315–317 (ESQ) participates in substrate binding. ATP is bound by residues Asn-523 and Gly-560. Residue Asn-561 coordinates Mg(2+). Position 563 (Ser-563) interacts with substrate.

The protein belongs to the FGAMS family. In terms of assembly, monomer. Part of the FGAM synthase complex composed of 1 PurL, 1 PurQ and 2 PurS subunits.

Its subcellular location is the cytoplasm. It catalyses the reaction N(2)-formyl-N(1)-(5-phospho-beta-D-ribosyl)glycinamide + L-glutamine + ATP + H2O = 2-formamido-N(1)-(5-O-phospho-beta-D-ribosyl)acetamidine + L-glutamate + ADP + phosphate + H(+). Its pathway is purine metabolism; IMP biosynthesis via de novo pathway; 5-amino-1-(5-phospho-D-ribosyl)imidazole from N(2)-formyl-N(1)-(5-phospho-D-ribosyl)glycinamide: step 1/2. Part of the phosphoribosylformylglycinamidine synthase complex involved in the purines biosynthetic pathway. Catalyzes the ATP-dependent conversion of formylglycinamide ribonucleotide (FGAR) and glutamine to yield formylglycinamidine ribonucleotide (FGAM) and glutamate. The FGAM synthase complex is composed of three subunits. PurQ produces an ammonia molecule by converting glutamine to glutamate. PurL transfers the ammonia molecule to FGAR to form FGAM in an ATP-dependent manner. PurS interacts with PurQ and PurL and is thought to assist in the transfer of the ammonia molecule from PurQ to PurL. This is Phosphoribosylformylglycinamidine synthase subunit PurL from Prochlorococcus marinus (strain MIT 9312).